Here is a 157-residue protein sequence, read N- to C-terminus: 6,7-dimethyl-8-ribityllumazine synthase (157 aa).

5-amino-6-(D-ribitylamino)uracil contacts are provided by residues Phe-22, 57–59 (AYE), and 81–83 (TVI). Position 86-87 (86-87 (GT)) interacts with (2S)-2-hydroxy-3-oxobutyl phosphate. His-89 acts as the Proton donor in catalysis. Residue Phe-114 participates in 5-amino-6-(D-ribitylamino)uracil binding. (2S)-2-hydroxy-3-oxobutyl phosphate is bound at residue Arg-128.

The protein belongs to the DMRL synthase family. In terms of assembly, forms an icosahedral capsid composed of 60 subunits, arranged as a dodecamer of pentamers.

The catalysed reaction is (2S)-2-hydroxy-3-oxobutyl phosphate + 5-amino-6-(D-ribitylamino)uracil = 6,7-dimethyl-8-(1-D-ribityl)lumazine + phosphate + 2 H2O + H(+). It functions in the pathway cofactor biosynthesis; riboflavin biosynthesis; riboflavin from 2-hydroxy-3-oxobutyl phosphate and 5-amino-6-(D-ribitylamino)uracil: step 1/2. Its function is as follows. Catalyzes the formation of 6,7-dimethyl-8-ribityllumazine by condensation of 5-amino-6-(D-ribitylamino)uracil with 3,4-dihydroxy-2-butanone 4-phosphate. This is the penultimate step in the biosynthesis of riboflavin. The protein is 6,7-dimethyl-8-ribityllumazine synthase of Haemophilus influenzae (strain ATCC 51907 / DSM 11121 / KW20 / Rd).